We begin with the raw amino-acid sequence, 153 residues long: Protein C (153 aa).

Residues 16 to 42 (SSETLTLLSNQEPLSMQDPPLVRSSTR) are disordered. Positions 18 to 29 (ETLTLLSNQEPL) are enriched in polar residues.

This Tupaia paramyxovirus (TPMV) protein is Protein C (P/V/C).